Here is a 376-residue protein sequence, read N- to C-terminus: uncharacterized protein (376 aa).

A signal peptide spans 1–22; the sequence is MVATGRIIITLLAAALDEIILA.

This sequence belongs to the ascovirus HvAV ORF17 family.

This is an uncharacterized protein from Heliothis virescens ascovirus 3e (HvAV-3e).